Reading from the N-terminus, the 642-residue chain is Threonine--tRNA ligase (642 aa).

The 58-residue stretch at 1–58 (MQVAGKELEVQQGALCGEVLKEALSKKQFKNVVVAKCGDTLLDLTTTVPADCTDLEPV) folds into the TGS domain. The segment at 239–530 (DHRKLGTQLD…LLEHTGGALP (292 aa)) is catalytic. Cys331, His382, and His507 together coordinate Zn(2+).

This sequence belongs to the class-II aminoacyl-tRNA synthetase family. Homodimer. It depends on Zn(2+) as a cofactor.

Its subcellular location is the cytoplasm. The catalysed reaction is tRNA(Thr) + L-threonine + ATP = L-threonyl-tRNA(Thr) + AMP + diphosphate + H(+). Functionally, catalyzes the attachment of threonine to tRNA(Thr) in a two-step reaction: L-threonine is first activated by ATP to form Thr-AMP and then transferred to the acceptor end of tRNA(Thr). Also edits incorrectly charged L-seryl-tRNA(Thr). The protein is Threonine--tRNA ligase of Maridesulfovibrio salexigens (strain ATCC 14822 / DSM 2638 / NCIMB 8403 / VKM B-1763) (Desulfovibrio salexigens).